A 446-amino-acid polypeptide reads, in one-letter code: CBL-interacting protein kinase 8 (446 aa).

Positions 13 to 266 (YEVGRTIGEG…IEEIRNDEWF (254 aa)) constitute a Protein kinase domain. Residues 19–27 (IGEGTFAKV) and K42 contribute to the ATP site. The Proton acceptor role is filled by D136. The interval 154-181 (DFGLSAWPAQGGALLRTTCGTPNYVAPE) is activation loop. Residues 301–329 (LDDEAGPLTLNAFDLIILSQGLNLAALFD) enclose the NAF domain. The segment at 336–365 (KLQNRFLSRKPAKVIMSSMEVVAQSMGYKT) is PPI.

It belongs to the protein kinase superfamily. CAMK Ser/Thr protein kinase family. SNF1 subfamily. It depends on Mn(2+) as a cofactor.

The enzyme catalyses L-seryl-[protein] + ATP = O-phospho-L-seryl-[protein] + ADP + H(+). It carries out the reaction L-threonyl-[protein] + ATP = O-phospho-L-threonyl-[protein] + ADP + H(+). Its function is as follows. CIPK serine-threonine protein kinases interact with CBL proteins. Binding of a CBL protein to the regulatory NAF domain of CIPK protein lead to the activation of the kinase in a calcium-dependent manner. This chain is CBL-interacting protein kinase 8 (CIPK8), found in Oryza sativa subsp. japonica (Rice).